The chain runs to 388 residues: tRNA (guanine(26)-N(2))-dimethyltransferase (388 aa).

Positions 4-383 (RTIVEGTTKI…APIAEIKKII (380 aa)) constitute a Trm1 methyltransferase domain. Residues Arg-41, Arg-78, Asp-94, and Ala-123 each contribute to the S-adenosyl-L-methionine site. Residues Cys-251, Cys-254, Cys-271, and Cys-274 each contribute to the Zn(2+) site.

Belongs to the class I-like SAM-binding methyltransferase superfamily. Trm1 family.

The enzyme catalyses guanosine(26) in tRNA + 2 S-adenosyl-L-methionine = N(2)-dimethylguanosine(26) in tRNA + 2 S-adenosyl-L-homocysteine + 2 H(+). In terms of biological role, dimethylates a single guanine residue at position 26 of a number of tRNAs using S-adenosyl-L-methionine as donor of the methyl groups. This chain is tRNA (guanine(26)-N(2))-dimethyltransferase, found in Methanosarcina acetivorans (strain ATCC 35395 / DSM 2834 / JCM 12185 / C2A).